We begin with the raw amino-acid sequence, 296 residues long: 4-diphosphocytidyl-2-C-methyl-D-erythritol kinase (296 aa).

Lys19 is an active-site residue. Residue 102–112 (PMGAGLGGGSS) coordinates ATP. The active site involves Asp144.

Belongs to the GHMP kinase family. IspE subfamily.

It carries out the reaction 4-CDP-2-C-methyl-D-erythritol + ATP = 4-CDP-2-C-methyl-D-erythritol 2-phosphate + ADP + H(+). It participates in isoprenoid biosynthesis; isopentenyl diphosphate biosynthesis via DXP pathway; isopentenyl diphosphate from 1-deoxy-D-xylulose 5-phosphate: step 3/6. Functionally, catalyzes the phosphorylation of the position 2 hydroxy group of 4-diphosphocytidyl-2C-methyl-D-erythritol. In Burkholderia pseudomallei (strain 1710b), this protein is 4-diphosphocytidyl-2-C-methyl-D-erythritol kinase.